The following is a 389-amino-acid chain: Glutamate 5-kinase (389 aa).

Lys16 serves as a coordination point for ATP. Residues Ser56, Asp143, and Asn155 each coordinate substrate. ATP is bound at residue 175-176; the sequence is SD. Positions 281-358 constitute a PUA domain; that stretch reads AGELHVDEGA…AEIEAILGYA (78 aa).

The protein belongs to the glutamate 5-kinase family.

The protein resides in the cytoplasm. It carries out the reaction L-glutamate + ATP = L-glutamyl 5-phosphate + ADP. Its pathway is amino-acid biosynthesis; L-proline biosynthesis; L-glutamate 5-semialdehyde from L-glutamate: step 1/2. Its function is as follows. Catalyzes the transfer of a phosphate group to glutamate to form L-glutamate 5-phosphate. This chain is Glutamate 5-kinase, found in Rhizobium etli (strain ATCC 51251 / DSM 11541 / JCM 21823 / NBRC 15573 / CFN 42).